A 421-amino-acid chain; its full sequence is MKFSTAIIVSFLFIADFCAAQSGVLDISKFGGKPNSDIGQALTSAWNEACASTTAAKIVIPAGTYQLNGIELKGPCKAPIELQVDGTIQAPADPSVIKGTEQWFKFLYMDHLTLSGKGVFDGQGATVYKKAAPASAWSGKNSNSKVFMNFGFNFVNNSIVRGVTSKDSKNFHVMVFGCKNITFDGFTITAPGDSPNTDGIHMGKSTDVKILNTNIGTGDDCVSIGDGSKQITVQGVNCGPGHGLSVGSLGKFTTEENVEGITVKNCTLTATDNGVRIKTWPDAPGTITVSDIHFEDITMTNVKNPVIIDQEYYPWNQCSKKNPSKIKLSKISFKNVKGTSGTAEGVVLICSSAVPCDGVELNNVDLKFNGAPTTAKCTNVKPLVTGTAPVCQAPGAPAASTTATPAASKTATPAAGKSPAK.

The first 20 residues, 1–20, serve as a signal peptide directing secretion; that stretch reads MKFSTAIIVSFLFIADFCAA. N-linked (GlcNAc...) asparagine glycosylation is found at Asn156 and Asn180. 2 PbH1 repeats span residues 178 to 204 and 205 to 226; these read CKNI…HMGK and STDV…SIGD. Catalysis depends on Asp219, which acts as the Proton donor. His242 is an active-site residue. 2 PbH1 repeats span residues 258–279 and 289–310; these read VEGI…RIKT and VSDI…IIDQ. An N-linked (GlcNAc...) asparagine glycan is attached at Asn265. The segment at 394 to 421 is disordered; the sequence is PGAPAASTTATPAASKTATPAAGKSPAK.

Belongs to the glycosyl hydrolase 28 family. Pollen specific.

Its subcellular location is the secreted. It localises to the cell wall. The catalysed reaction is (1,4-alpha-D-galacturonosyl)n+m + H2O = (1,4-alpha-D-galacturonosyl)n + (1,4-alpha-D-galacturonosyl)m.. May function in the depolymerization of the pectin in its walls during pollen tube elongation, or in that of the pistil during pollination. This Medicago sativa (Alfalfa) protein is Polygalacturonase.